A 121-amino-acid polypeptide reads, in one-letter code: Large ribosomal subunit protein bL19 (121 aa).

This sequence belongs to the bacterial ribosomal protein bL19 family.

This protein is located at the 30S-50S ribosomal subunit interface and may play a role in the structure and function of the aminoacyl-tRNA binding site. In Neisseria meningitidis serogroup C (strain 053442), this protein is Large ribosomal subunit protein bL19.